The following is a 429-amino-acid chain: Tol-Pal system protein TolB (429 aa).

The signal sequence occupies residues 1–21; sequence MKPVFKMLLSLLILWTSLLHA.

Belongs to the TolB family. The Tol-Pal system is composed of five core proteins: the inner membrane proteins TolA, TolQ and TolR, the periplasmic protein TolB and the outer membrane protein Pal. They form a network linking the inner and outer membranes and the peptidoglycan layer.

The protein resides in the periplasm. Its function is as follows. Part of the Tol-Pal system, which plays a role in outer membrane invagination during cell division and is important for maintaining outer membrane integrity. TolB occupies a key intermediary position in the Tol-Pal system because it communicates directly with both membrane-embedded components, Pal in the outer membrane and TolA in the inner membrane. The sequence is that of Tol-Pal system protein TolB from Hamiltonella defensa subsp. Acyrthosiphon pisum (strain 5AT).